Reading from the N-terminus, the 229-residue chain is Non-structural protein V (229 aa).

Residues 28–115 (LGATSQPPPN…DTQSPSPSKT (88 aa)) form a disordered region. Over residues 45–55 (KTEENNDETRT) the composition is skewed to basic and acidic residues. Low complexity predominate over residues 59-71 (SASAEAPAHASSP). Polar residues-rich tracts occupy residues 82–97 (GKQS…NRPQ) and 105–115 (SDTQSPSPSKT). 8 residues coordinate Zn(2+): histidine 178, cysteine 197, cysteine 201, cysteine 213, cysteine 215, cysteine 218, cysteine 222, and cysteine 225.

This sequence belongs to the paramyxoviruses V protein family.

Blocks host interferon signaling. The protein is Non-structural protein V (P/V) of Human parainfluenza 4b virus (strain 68-333) (HPIV-4b).